The sequence spans 413 residues: 4-hydroxy-3-methylbut-2-en-1-yl diphosphate synthase (flavodoxin) (413 aa).

Cysteine 298, cysteine 301, cysteine 344, and glutamate 351 together coordinate [4Fe-4S] cluster.

The protein belongs to the IspG family. The cofactor is [4Fe-4S] cluster.

It catalyses the reaction (2E)-4-hydroxy-3-methylbut-2-enyl diphosphate + oxidized [flavodoxin] + H2O + 2 H(+) = 2-C-methyl-D-erythritol 2,4-cyclic diphosphate + reduced [flavodoxin]. The protein operates within isoprenoid biosynthesis; isopentenyl diphosphate biosynthesis via DXP pathway; isopentenyl diphosphate from 1-deoxy-D-xylulose 5-phosphate: step 5/6. Its function is as follows. Converts 2C-methyl-D-erythritol 2,4-cyclodiphosphate (ME-2,4cPP) into 1-hydroxy-2-methyl-2-(E)-butenyl 4-diphosphate. The chain is 4-hydroxy-3-methylbut-2-en-1-yl diphosphate synthase (flavodoxin) from Koribacter versatilis (strain Ellin345).